A 93-amino-acid chain; its full sequence is Small ribosomal subunit protein uS19 (93 aa).

The protein belongs to the universal ribosomal protein uS19 family.

Functionally, protein S19 forms a complex with S13 that binds strongly to the 16S ribosomal RNA. This is Small ribosomal subunit protein uS19 from Frankia alni (strain DSM 45986 / CECT 9034 / ACN14a).